We begin with the raw amino-acid sequence, 602 residues long: mRNA-decapping enzyme 1A (602 aa).

At serine 82 the chain carries Phosphoserine. Basic and acidic residues predominate over residues 152-161; it reads RSQQAARDKQ. Disordered regions lie at residues 152–174, 191–234, and 267–291; these read RSQQAARDKQSPSQANGCSDQRP, NQMG…PSGH, and GDASQKEPSSFLPFPFEQSGGAPQS. 3 positions are modified to phosphoserine: serine 162, serine 199, and serine 200. Residues 193 to 229 are compositionally biased toward polar residues; that stretch reads MGGSNISSPGLQPSTQLSNLGSTETLEETPSGSQDKS. Residues serine 335 and serine 339 each carry the phosphoserine modification. Threonine 367 bears the Phosphothreonine mark. Phosphoserine is present on serine 372. Arginine 395 bears the Asymmetric dimethylarginine mark. Threonine 420 bears the Phosphothreonine mark. Serine 441, serine 542, serine 543, and serine 545 each carry phosphoserine. Phosphothreonine is present on residues threonine 548 and threonine 551.

This sequence belongs to the DCP1 family. Forms a complex with EDC3, DCP2, DDX6 and EDC4/HEDLS, within this complex directly interacts with EDC3. Part of a cytoplasmic complex containing proteins involved in mRNA decay, including XRN1 and LSM1. Interacts with DCP1B. Interacts with DCP2. Interacts with DDX17 in an RNA-independent manner. Interacts with PNRC2. Interacts with SMAD4. Interacts with UPF1. Interacts with ZC3HAV1. Interacts with ZFP36L1. Interacts with NBDY. Interacts with DHX34; the interaction is RNA-independent. Ubiquitous, with highest expression in the spleen and testis (at protein level).

Its subcellular location is the cytoplasm. It localises to the P-body. The protein resides in the nucleus. The catalysed reaction is a 5'-end (N(7)-methyl 5'-triphosphoguanosine)-ribonucleoside in mRNA + H2O = N(7)-methyl-GDP + a 5'-end phospho-ribonucleoside in mRNA + 2 H(+). Its function is as follows. Necessary for the degradation of mRNAs, both in normal mRNA turnover and in nonsense-mediated mRNA decay. Removes the 7-methyl guanine cap structure from mRNA molecules, yielding a 5'-phosphorylated mRNA fragment and 7m-GDP. Contributes to the transactivation of target genes after stimulation by TGFB1. Essential for embryonic development. The polypeptide is mRNA-decapping enzyme 1A (Dcp1a) (Mus musculus (Mouse)).